Here is an 86-residue protein sequence, read N- to C-terminus: Small ribosomal subunit protein bS16 (86 aa).

Belongs to the bacterial ribosomal protein bS16 family.

In Thermoanaerobacter pseudethanolicus (strain ATCC 33223 / 39E) (Clostridium thermohydrosulfuricum), this protein is Small ribosomal subunit protein bS16.